A 601-amino-acid chain; its full sequence is Aspartate--tRNA(Asp/Asn) ligase (601 aa).

Glutamate 177 is a binding site for L-aspartate. An aspartate region spans residues glutamine 201–lysine 204. Position 223 (arginine 223) interacts with L-aspartate. Residues arginine 223–glutamate 225 and glutamine 232 contribute to the ATP site. Position 455 (histidine 455) interacts with L-aspartate. ATP is bound at residue glutamate 489. Arginine 496 is an L-aspartate binding site. Glycine 541–arginine 544 provides a ligand contact to ATP. The disordered stretch occupies residues valine 568 to valine 601. Basic and acidic residues predominate over residues glutamate 581–valine 601.

It belongs to the class-II aminoacyl-tRNA synthetase family. Type 1 subfamily. As to quaternary structure, homodimer.

It is found in the cytoplasm. The enzyme catalyses tRNA(Asx) + L-aspartate + ATP = L-aspartyl-tRNA(Asx) + AMP + diphosphate. In terms of biological role, aspartyl-tRNA synthetase with relaxed tRNA specificity since it is able to aspartylate not only its cognate tRNA(Asp) but also tRNA(Asn). Reaction proceeds in two steps: L-aspartate is first activated by ATP to form Asp-AMP and then transferred to the acceptor end of tRNA(Asp/Asn). The polypeptide is Aspartate--tRNA(Asp/Asn) ligase (Corynebacterium diphtheriae (strain ATCC 700971 / NCTC 13129 / Biotype gravis)).